Consider the following 979-residue polypeptide: Translation initiation factor IF-2 (979 aa).

Residues 50–77 show a composition bias toward basic and acidic residues; sequence LKRSHGQSDDSARKKITLTKRETSEIRQ. Positions 50–385 are disordered; the sequence is LKRSHGQSDD…GKHNADDARS (336 aa). A compositionally biased stretch (polar residues) spans 78–87; it reads SDSTGKTRTV. 3 stretches are compositionally biased toward basic and acidic residues: residues 98 to 109, 121 to 142, and 149 to 173; these read IKRDDVESHGDG, EEVR…RQEA, and EAAE…RRQA. Over residues 174–192 the composition is skewed to low complexity; the sequence is ELLAQKAAEEAAAAQAAAD. Basic and acidic residues-rich tracts occupy residues 196–211, 219–263, and 280–291; these read ETAR…RLAT, NADD…EAEA, and PSERKAEEKKAE. Residues 317–327 show a composition bias toward low complexity; that stretch reads APAATTTTAAA. Positions 351–368 are enriched in gly residues; that stretch reads GGGLKTRGDSSGGVGGWR. One can recognise a tr-type G domain in the interval 479-646; sequence PRPPVVTVMG…NVLLQAEVLE (168 aa). The interval 488 to 495 is G1; it reads GHVDHGKT. Residue 488–495 coordinates GTP; sequence GHVDHGKT. Positions 513–517 are G2; that stretch reads GITQH. The segment at 534 to 537 is G3; the sequence is DTPG. GTP-binding positions include 534–538 and 588–591; these read DTPGH and TKVD. Residues 588–591 are G4; that stretch reads TKVD. A G5 region spans residues 624 to 626; that stretch reads SAK.

Belongs to the TRAFAC class translation factor GTPase superfamily. Classic translation factor GTPase family. IF-2 subfamily.

It is found in the cytoplasm. In terms of biological role, one of the essential components for the initiation of protein synthesis. Protects formylmethionyl-tRNA from spontaneous hydrolysis and promotes its binding to the 30S ribosomal subunits. Also involved in the hydrolysis of GTP during the formation of the 70S ribosomal complex. In Cupriavidus metallidurans (strain ATCC 43123 / DSM 2839 / NBRC 102507 / CH34) (Ralstonia metallidurans), this protein is Translation initiation factor IF-2.